The sequence spans 471 residues: Neuraminidase (471 aa).

The Intravirion segment spans residues M1–K6. The helical transmembrane segment at L7–S27 threads the bilayer. An involved in apical transport and lipid raft association region spans residues S11 to V33. Residues N28–S471 lie on the Virion surface side of the membrane. N32, N47, N56, N57, N67, N68, and N87 each carry an N-linked (GlcNAc...) asparagine; by host glycan. Residues H36–N87 are hypervariable stalk region. The tract at residues L90 to S471 is head of neuraminidase. Disulfide bonds link C91–C419, C123–C128, C183–C230, C232–C237, C278–C291, C280–C289, C318–C336, and C423–C450. R117 is a substrate binding site. N-linked (GlcNAc...) asparagine; by host glycosylation occurs at N145. D150 serves as the catalytic Proton donor/acceptor. R151 provides a ligand contact to substrate. 2 N-linked (GlcNAc...) asparagine; by host glycosylation sites follow: N200 and N234. Position 276-277 (E276–E277) interacts with substrate. A substrate-binding site is contributed by R292. Ca(2+)-binding residues include D293, G297, and D324. Residue R371 participates in substrate binding. Residue N401 is glycosylated (N-linked (GlcNAc...) asparagine; by host). Y405 (nucleophile) is an active-site residue.

The protein belongs to the glycosyl hydrolase 34 family. In terms of assembly, homotetramer. Ca(2+) is required as a cofactor. Post-translationally, N-glycosylated.

The protein resides in the virion membrane. Its subcellular location is the host apical cell membrane. It carries out the reaction Hydrolysis of alpha-(2-&gt;3)-, alpha-(2-&gt;6)-, alpha-(2-&gt;8)- glycosidic linkages of terminal sialic acid residues in oligosaccharides, glycoproteins, glycolipids, colominic acid and synthetic substrates.. Inhibited by the neuraminidase inhibitors zanamivir (Relenza) and oseltamivir (Tamiflu). These drugs interfere with the release of progeny virus from infected cells and are effective against all influenza strains. Resistance to neuraminidase inhibitors is quite rare. In terms of biological role, catalyzes the removal of terminal sialic acid residues from viral and cellular glycoconjugates. Cleaves off the terminal sialic acids on the glycosylated HA during virus budding to facilitate virus release. Additionally helps virus spread through the circulation by further removing sialic acids from the cell surface. These cleavages prevent self-aggregation and ensure the efficient spread of the progeny virus from cell to cell. Otherwise, infection would be limited to one round of replication. Described as a receptor-destroying enzyme because it cleaves a terminal sialic acid from the cellular receptors. May facilitate viral invasion of the upper airways by cleaving the sialic acid moieties on the mucin of the airway epithelial cells. Likely to plays a role in the budding process through its association with lipid rafts during intracellular transport. May additionally display a raft-association independent effect on budding. Plays a role in the determination of host range restriction on replication and virulence. Sialidase activity in late endosome/lysosome traffic seems to enhance virus replication. This chain is Neuraminidase, found in Influenza A virus (strain A/Duck/Germany/1949 H10N7).